Reading from the N-terminus, the 349-residue chain is Isopentenyl-diphosphate delta-isomerase (349 aa).

6 to 7 is a substrate binding site; sequence RK. Residues 62-64, Ser93, and Asn122 contribute to the FMN site; that span reads AMT. Gln152 contributes to the substrate binding site. Position 153 (Glu153) interacts with Mg(2+). FMN-binding positions include Lys184, Thr214, 258-259, and 280-281; these read GG and AG.

It belongs to the IPP isomerase type 2 family. As to quaternary structure, homooctamer. Dimer of tetramers. FMN serves as cofactor. The cofactor is NADPH. It depends on Mg(2+) as a cofactor.

It localises to the cytoplasm. It catalyses the reaction isopentenyl diphosphate = dimethylallyl diphosphate. Its function is as follows. Involved in the biosynthesis of isoprenoids. Catalyzes the 1,3-allylic rearrangement of the homoallylic substrate isopentenyl (IPP) to its allylic isomer, dimethylallyl diphosphate (DMAPP). This is Isopentenyl-diphosphate delta-isomerase from Bacillus mycoides (strain KBAB4) (Bacillus weihenstephanensis).